We begin with the raw amino-acid sequence, 310 residues long: MKIPEGPCRVCHSVKGTRRHFGITACMSCSSFFRRSLNCKFYCPANNSCTILDDQKQFCRSCRYNKCVQSGMRRDCVRKQSYRRQAGRKEAKSPAVSCSNKLSESYEELLNFYVKEANESIARKRQSPLKNAHQVKTSKELLEISKSEDKTSLDAVLHCYGTYILDDEDITTLIRYFKFMNTWIDSAFVYSKSTSNEELLDGNDICKFAYQIDTSIGLSLKNLNLNIFEYAALRAICIWNLKFYETSPKMKSLALEHYKGITGALRQYYENYMSDMDIAVRIGEITMQITTISDLFHDLITLHQKYQIPF.

Positions 5 to 79 form a DNA-binding region, nuclear receptor; that stretch reads EGPCRVCHSV…SGMRRDCVRK (75 aa). 2 consecutive NR C4-type zinc fingers follow at residues 8 to 29 and 43 to 67; these read CRVC…CMSC and CPAN…YNKC. Positions 101-310 constitute an NR LBD domain; it reads KLSESYEELL…TLHQKYQIPF (210 aa).

The protein belongs to the nuclear hormone receptor family.

The protein localises to the nucleus. Orphan nuclear receptor. The protein is Nuclear hormone receptor family member nhr-89 (nhr-89) of Caenorhabditis elegans.